The primary structure comprises 361 residues: Histidinol-phosphate aminotransferase (361 aa).

The residue at position 219 (Lys219) is an N6-(pyridoxal phosphate)lysine.

The protein belongs to the class-II pyridoxal-phosphate-dependent aminotransferase family. Histidinol-phosphate aminotransferase subfamily. Homodimer. The cofactor is pyridoxal 5'-phosphate.

The enzyme catalyses L-histidinol phosphate + 2-oxoglutarate = 3-(imidazol-4-yl)-2-oxopropyl phosphate + L-glutamate. The protein operates within amino-acid biosynthesis; L-histidine biosynthesis; L-histidine from 5-phospho-alpha-D-ribose 1-diphosphate: step 7/9. This Acinetobacter baumannii (strain AB307-0294) protein is Histidinol-phosphate aminotransferase.